The primary structure comprises 165 residues: Protein SprT (165 aa).

In terms of domain architecture, SprT-like spans 22–163 (LAQANLKLDR…RCVHCGEPLV (142 aa)). Zn(2+) is bound at residue histidine 78. Glutamate 79 is a catalytic residue. Histidine 82 is a binding site for Zn(2+).

This sequence belongs to the SprT family. It depends on Zn(2+) as a cofactor.

The protein localises to the cytoplasm. This Salmonella paratyphi C (strain RKS4594) protein is Protein SprT.